A 249-amino-acid chain; its full sequence is Undecaprenyl-diphosphatase (249 aa).

8 helical membrane passes run 11–31, 35–55, 80–100, 101–121, 135–155, 180–200, 202–222, and 226–246; these read GLTE…TAIF, PDVG…LIFV, LVLS…FIES, VFSS…LMLL, IPYF…LPGI, FLMS…NVAF, TEQI…LYLV, and VIGG…FFVL.

Belongs to the UppP family.

The protein resides in the cell membrane. It carries out the reaction di-trans,octa-cis-undecaprenyl diphosphate + H2O = di-trans,octa-cis-undecaprenyl phosphate + phosphate + H(+). Catalyzes the dephosphorylation of undecaprenyl diphosphate (UPP). The chain is Undecaprenyl-diphosphatase from Methanococcus maripaludis (strain C7 / ATCC BAA-1331).